Here is a 469-residue protein sequence, read N- to C-terminus: 3-isopropylmalate dehydratase large subunit (469 aa).

Positions 347, 410, and 413 each coordinate [4Fe-4S] cluster.

The protein belongs to the aconitase/IPM isomerase family. LeuC type 1 subfamily. In terms of assembly, heterodimer of LeuC and LeuD. [4Fe-4S] cluster is required as a cofactor.

The catalysed reaction is (2R,3S)-3-isopropylmalate = (2S)-2-isopropylmalate. It functions in the pathway amino-acid biosynthesis; L-leucine biosynthesis; L-leucine from 3-methyl-2-oxobutanoate: step 2/4. In terms of biological role, catalyzes the isomerization between 2-isopropylmalate and 3-isopropylmalate, via the formation of 2-isopropylmaleate. The protein is 3-isopropylmalate dehydratase large subunit of Burkholderia pseudomallei (strain 1106a).